The chain runs to 602 residues: MAETPRPAEHTSSLKIYFRLLSYVKPYVGIFLLSIVGFVIFASTQPMLAGILKYFVDGLSNPEAVLFPNVPYLRDLQLLQAVPLLIILIAAWQGLGSFLGNYFLAKVSLSLVHDLRVALFNKLLVLPNRYFDNHNSGHLISRITFNVTMVTGAATDAIKVVIREGLTVVFLFAYLLWMNWHLTLVMVAILPVIAVMVSIASKKFRKQSKKIQVAMGDVTHVASETIQGYRVVRSFGGEAYEQQRFGQASQSNTDKQLRMTKTGSLYTPMLQLVIYSAMAALMFLVLFLRGDSTAGDLVAYITAAGLLPKPIRQLSEVSSTIQKGLAGAESIFEQLDEAPEVDTGTVEKERVEGRLEVRNLSFTYPGTEREVLSDISFVAEPGQMIALVGRSGSGKSTLAALIPRFYHHDKGQILLDGVEIEHYRLRNLRRHVSQVTQHVTLFNDTVANNIAYGDLAGAPRADIEAAAADAYAKEFVDRLPKGFDTEVGENGVLLSGGQRQRLAIARALLKNAPLLILDEATSALDTESERHIQAALDHVMQGRTTLVIAHRLSTIEKADQILVMDQGRLVERGTHTELLAANGHYARLHAMGLDEPAKADIT.

The next 5 helical transmembrane spans lie at 28–48 (VGIFLLSIVGFVIFASTQPML), 84–104 (LLIILIAAWQGLGSFLGNYFL), 158–178 (IKVVIREGLTVVFLFAYLLWM), 180–200 (WHLTLVMVAILPVIAVMVSIA), and 268–288 (PMLQLVIYSAMAALMFLVLFL). Positions 32 to 323 (LLSIVGFVIF…LSEVSSTIQK (292 aa)) constitute an ABC transmembrane type-1 domain. The ABC transporter domain maps to 355–591 (LEVRNLSFTY…NGHYARLHAM (237 aa)). Position 389–396 (389–396 (GRSGSGKS)) interacts with ATP.

Belongs to the ABC transporter superfamily. Lipid exporter (TC 3.A.1.106) family. As to quaternary structure, homodimer.

Its subcellular location is the cell inner membrane. The enzyme catalyses ATP + H2O + lipid A-core oligosaccharideSide 1 = ADP + phosphate + lipid A-core oligosaccharideSide 2.. In terms of biological role, involved in lipopolysaccharide (LPS) biosynthesis. Translocates lipid A-core from the inner to the outer leaflet of the inner membrane. Transmembrane domains (TMD) form a pore in the inner membrane and the ATP-binding domain (NBD) is responsible for energy generation. This is ATP-dependent lipid A-core flippase from Pseudomonas putida (strain ATCC 47054 / DSM 6125 / CFBP 8728 / NCIMB 11950 / KT2440).